The sequence spans 506 residues: ATP synthase subunit alpha (506 aa).

ATP is bound at residue 169-176 (GDRQTGKT).

It belongs to the ATPase alpha/beta chains family. As to quaternary structure, F-type ATPases have 2 components, CF(1) - the catalytic core - and CF(0) - the membrane proton channel. CF(1) has five subunits: alpha(3), beta(3), gamma(1), delta(1), epsilon(1). CF(0) has three main subunits: a(1), b(2) and c(9-12). The alpha and beta chains form an alternating ring which encloses part of the gamma chain. CF(1) is attached to CF(0) by a central stalk formed by the gamma and epsilon chains, while a peripheral stalk is formed by the delta and b chains.

The protein localises to the cell membrane. It carries out the reaction ATP + H2O + 4 H(+)(in) = ADP + phosphate + 5 H(+)(out). Its function is as follows. Produces ATP from ADP in the presence of a proton gradient across the membrane. The alpha chain is a regulatory subunit. This chain is ATP synthase subunit alpha, found in Acetivibrio thermocellus (strain ATCC 27405 / DSM 1237 / JCM 9322 / NBRC 103400 / NCIMB 10682 / NRRL B-4536 / VPI 7372) (Clostridium thermocellum).